The primary structure comprises 103 residues: Leukocyte cysteine proteinase inhibitor 1 (103 aa).

Residue Met1 is modified to Blocked amino end (Met); partial. Residues 1-20 form a disordered region; it reads MESEEMLAGGLTEPRPATPE. Positions 51–55 match the Secondary area of contact motif; it reads QVVAG.

The protein belongs to the cystatin family.

Its subcellular location is the cytoplasm. Potent inhibitor of cathepsins L and S, and papain. This chain is Leukocyte cysteine proteinase inhibitor 1, found in Sus scrofa (Pig).